The following is a 393-amino-acid chain: Ninja-family protein 1 (393 aa).

2 disordered regions span residues 1–27 (MEGFSRDLLCGIGKGDAPPPEKRPGQL) and 155–200 (NDDW…KEMN). Basic and acidic residues predominate over residues 156–170 (DDWKKRKEAQSLKRL).

This sequence belongs to the Ninja family.

The protein resides in the nucleus. The chain is Ninja-family protein 1 from Zea mays (Maize).